A 642-amino-acid chain; its full sequence is Chaperone protein HtpG (642 aa).

The a; substrate-binding stretch occupies residues 1 to 349; sequence MSAATETEVR…SADLPLNVSR (349 aa). The segment at 216 to 238 is disordered; it reads ELPPAPPAKEGEEPEPPKTPEWE. Over residues 224 to 236 the composition is skewed to basic and acidic residues; it reads KEGEEPEPPKTPE. The segment at 350–570 is b; it reads EILQQNRQVE…AHDMSATLER (221 aa). The tract at residues 571–642 is c; it reads LLKEAGQEVP…VKRLNKLLMG (72 aa).

Belongs to the heat shock protein 90 family. As to quaternary structure, homodimer.

The protein resides in the cytoplasm. In terms of biological role, molecular chaperone. Has ATPase activity. The protein is Chaperone protein HtpG of Magnetococcus marinus (strain ATCC BAA-1437 / JCM 17883 / MC-1).